Reading from the N-terminus, the 133-residue chain is Small ribosomal subunit protein eS8 (133 aa).

A disordered region spans residues 1–31 (MGFYQGPDNRKITGGLKGKHRDKRKYEIGNP).

This sequence belongs to the eukaryotic ribosomal protein eS8 family. In terms of assembly, part of the 30S ribosomal subunit.

This is Small ribosomal subunit protein eS8 from Saccharolobus solfataricus (strain ATCC 35092 / DSM 1617 / JCM 11322 / P2) (Sulfolobus solfataricus).